The chain runs to 201 residues: Superoxide dismutase [Mn/Fe] (201 aa).

Residues His-27, His-75, Asp-161, and His-165 each coordinate Fe(3+). His-27, His-75, Asp-161, and His-165 together coordinate Mn(2+).

The protein belongs to the iron/manganese superoxide dismutase family. As to quaternary structure, homotetramer. Mn(2+) serves as cofactor. It depends on Fe(3+) as a cofactor.

It carries out the reaction 2 superoxide + 2 H(+) = H2O2 + O2. Shows decreasing activity with increasing pH. Slightly inhibited by azide and fluoride at pH 7-8; the inhibition is drastically increased towards lower pH. Functionally, destroys superoxide anion radicals which are normally produced within the cells and which are toxic to biological systems. Catalyzes the dismutation of superoxide anion radicals into O2 and H2O2 by successive reduction and oxidation of the transition metal ion at the active site. The sequence is that of Superoxide dismutase [Mn/Fe] (sodA) from Propionibacterium freudenreichii subsp. shermanii.